Here is a 132-residue protein sequence, read N- to C-terminus: Small ribosomal subunit protein uS8 (132 aa).

It belongs to the universal ribosomal protein uS8 family. In terms of assembly, part of the 30S ribosomal subunit. Contacts proteins S5 and S12.

Its function is as follows. One of the primary rRNA binding proteins, it binds directly to 16S rRNA central domain where it helps coordinate assembly of the platform of the 30S subunit. In Limosilactobacillus fermentum (strain NBRC 3956 / LMG 18251) (Lactobacillus fermentum), this protein is Small ribosomal subunit protein uS8.